The sequence spans 288 residues: Prohibitin-2 (288 aa).

Residues 21–43 form a helical; Signal-anchor for type II membrane protein membrane-spanning segment; the sequence is GKYAFTGTGLLLALGLAGFAVQT. Residues 125 to 128 carry the AIM motif; that stretch reads YRTL.

This sequence belongs to the prohibitin family. In terms of assembly, the mitochondrial prohibitin complex consists of two subunits (phb1 and phb2). The subunits assemble into a membrane-associated ring-shaped supercomplex of approximately 1 mDa.

The protein resides in the mitochondrion inner membrane. Its function is as follows. Prohibitin probably acts as a holdase/unfoldase for the stabilization of newly synthesized mitochondrial proteins. Involved in mitophagy; may act as an adapter for atg8 that supports mitophagosome assembly. Negatively regulates the proteolytic processing of atg32 via the i-AAA protease. Acts as a negative regulator of the m-AAA protease. The polypeptide is Prohibitin-2 (phb2) (Schizosaccharomyces pombe (strain 972 / ATCC 24843) (Fission yeast)).